The chain runs to 374 residues: MLNRPSSPDGGEAHAWPPDPEIPVFANAEHAHRRPLRWMFALVAVALSCLLATGIWRSRAAPPHAATQTVAPAGQALPPGRMFTVHPREPEPAPLPDMPAAPNPILPQPRPAPPVPPPPIRAPYDYDEPAPRRDSAALKSGPAMMVATAARLGQTERAGMAEDGVSADAATLIGRSVSRATRSGGRDYRLLPGTFIDCILQTRIVTNVPGLTTCIVSRDVYSASGKRVLVPRGTTVVGEYRADLAQGSQRIYVAWSRLFMPSGLTIELASPAVDGTGAAGLPGVVDDKFAQRFGGALLLSVLGDATSYMLARATDARHGVNVNLTAAGTMNSLAASALNNTINIPPTLYKNHGDQIGILVARPLDFSILRGTNE.

Residues 38–56 (WMFALVAVALSCLLATGIW) traverse the membrane as a helical segment. The disordered stretch occupies residues 87–116 (PREPEPAPLPDMPAAPNPILPQPRPAPPVP). Pro residues predominate over residues 92–116 (PAPLPDMPAAPNPILPQPRPAPPVP).

It belongs to the TrbI/VirB10 family.

It is found in the cell membrane. The sequence is that of Type IV secretion system protein PtlG homolog (ptlG) from Bordetella parapertussis (strain 12822 / ATCC BAA-587 / NCTC 13253).